Reading from the N-terminus, the 291-residue chain is Regulator of rDNA transcription protein 5 (291 aa).

The 84-residue stretch at 21-104 (KRIYISNLDF…RTLKIKMYVP (84 aa)) folds into the RRM 1 domain. The segment at 109–151 (ARAERRKEKRKVPAPQAEENPDAAPQDAQQPQPPAPAEEPTSK) is disordered. Positions 152-235 (DTVYCAYLPS…KKITLRPARL (84 aa)) constitute an RRM 2 domain. The interval 271–291 (HRQQEAEIPAAETPDDVAATA) is disordered.

This sequence belongs to the RRT5 family.

Functionally, may be involved in the modulation of rDNA transcription. The protein is Regulator of rDNA transcription protein 5 (RRT5) of Lachancea thermotolerans (strain ATCC 56472 / CBS 6340 / NRRL Y-8284) (Yeast).